A 410-amino-acid chain; its full sequence is Multifunctional CCA protein (410 aa).

G8 and R11 together coordinate ATP. Positions 8 and 11 each coordinate CTP. Residues D21 and D23 each coordinate Mg(2+). 3 residues coordinate ATP: R91, R137, and R140. Residues R91, R137, and R140 each coordinate CTP. The 102-residue stretch at 228–329 (TGVHVLSVLQ…LELLQSFDVY (102 aa)) folds into the HD domain.

This sequence belongs to the tRNA nucleotidyltransferase/poly(A) polymerase family. Bacterial CCA-adding enzyme type 1 subfamily. In terms of assembly, monomer. Can also form homodimers and oligomers. Requires Mg(2+) as cofactor. It depends on Ni(2+) as a cofactor.

The catalysed reaction is a tRNA precursor + 2 CTP + ATP = a tRNA with a 3' CCA end + 3 diphosphate. The enzyme catalyses a tRNA with a 3' CCA end + 2 CTP + ATP = a tRNA with a 3' CCACCA end + 3 diphosphate. Catalyzes the addition and repair of the essential 3'-terminal CCA sequence in tRNAs without using a nucleic acid template. Adds these three nucleotides in the order of C, C, and A to the tRNA nucleotide-73, using CTP and ATP as substrates and producing inorganic pyrophosphate. tRNA 3'-terminal CCA addition is required both for tRNA processing and repair. Also involved in tRNA surveillance by mediating tandem CCA addition to generate a CCACCA at the 3' terminus of unstable tRNAs. While stable tRNAs receive only 3'-terminal CCA, unstable tRNAs are marked with CCACCA and rapidly degraded. This chain is Multifunctional CCA protein, found in Pseudomonas aeruginosa (strain LESB58).